The chain runs to 151 residues: Small ribosomal subunit protein uS15 (151 aa).

This sequence belongs to the universal ribosomal protein uS15 family.

The sequence is that of Small ribosomal subunit protein uS15 (RPS13) from Agaricus bisporus (White button mushroom).